The primary structure comprises 149 residues: Transcriptional regulator MraZ (149 aa).

SpoVT-AbrB domains lie at 7-54 (KYVN…GISH) and 83-126 (ALQL…QPQN).

This sequence belongs to the MraZ family. As to quaternary structure, forms oligomers.

Its subcellular location is the cytoplasm. The protein resides in the nucleoid. The sequence is that of Transcriptional regulator MraZ from Rickettsia canadensis (strain McKiel).